The chain runs to 364 residues: MANKTILFNKHLESNAKMVDFHGWDMPLNYGSQIEEHNAVRQDAGMFDVSHMTVVDVIGNDACAFLRKLLANDVAKLKVPGKALYGGMLDENAGVIDDLITYYLTDTNYRVVVNSATREKDLAWIAKQSQGFDVTVTERPELAMIAVQGPNAKAKAAAVLSAEQNAAIEGMKPFFGKQAGSLFIATTGYTGEAGYEIIVPEDEAQAMWQALLDQGVKPCGLGARDTLRLEAGMNLYGLDMDETINPLAANMGWTIAWEPSDRDFIGRKALETLRDAGTDKLVGLVMEEKGVLRHDMPVFFTDSAGVEHQGVITSGTFSPTLGYSIAMARVPNSIGDTAEVEMRKKRVAVRVVAPNFVRNGKQAF.

Belongs to the GcvT family. In terms of assembly, the glycine cleavage system is composed of four proteins: P, T, L and H.

The catalysed reaction is N(6)-[(R)-S(8)-aminomethyldihydrolipoyl]-L-lysyl-[protein] + (6S)-5,6,7,8-tetrahydrofolate = N(6)-[(R)-dihydrolipoyl]-L-lysyl-[protein] + (6R)-5,10-methylene-5,6,7,8-tetrahydrofolate + NH4(+). In terms of biological role, the glycine cleavage system catalyzes the degradation of glycine. The protein is Aminomethyltransferase of Shewanella baltica (strain OS195).